The chain runs to 551 residues: F-box only protein 31 (551 aa).

Residues 12 to 38 form a disordered region; the sequence is QSGGCRRRQQRKGAGNGPELEDEEEED. The F-box domain maps to 58–104; the sequence is PRSLLHLPPEILVEIFSSLPGTELPSLAQVCRKFRQILTTDTIWKRR. Positions 229, 237, 253, and 259 each coordinate Zn(2+). Residues 402–459 form a disordered region; sequence REQRQTGNEEDDGRGAGPDKAEHSQQPAPVLRPANEDANKVDGGDGEEQKPPNVQSFV. Basic and acidic residues-rich tracts occupy residues 414 to 424 and 435 to 451; these read GRGAGPDKAEH and ANED…EEQK.

This sequence belongs to the FBXO31 family. Part of a SCF (SKP1-cullin-F-box) protein ligase complex SCF(FBXO31).

It is found in the cytoplasm. Its pathway is protein modification; protein ubiquitination. In terms of biological role, substrate-recognition component of the SCF(FBXO31) protein ligase complex, which specifically mediates the ubiquitination of proteins amidated at their C-terminus in response to oxidative stress, leading to their degradation by the proteasome. Fbxo31 specifically recognizes and binds C-terminal peptides bearing an amide: C-terminal amidation in response to oxidative stress takes place following protein fragmentation. The SCF(FBXO31) also plays a role in G1 arrest following DNA damage by mediating ubiquitination of phosphorylated cyclin-D1 (ccnd1), promoting its degradation by the proteasome, resulting in G1 arrest. The SCF(FBXO31) complex is however not a major regulator of ccnd1 stability during the G1/S transition. The protein is F-box only protein 31 (fbxo31) of Xenopus tropicalis (Western clawed frog).